Consider the following 854-residue polypeptide: Espin (854 aa).

ANK repeat units follow at residues 1 to 31 (MALE…GPSL), 35 to 64 (LDAL…LPAA), 69 to 99 (NGAT…RVQD), 103 to 133 (SGAT…DPTA), 137 to 167 (MGAL…GVNA), 171 to 201 (NGAT…DPHA), 205 to 235 (DGMT…SLSE), 239 to 268 (DGAT…EISA), and 271 to 300 (WGGT…ELDV). Residues Ser338 and Ser342 each carry the phosphoserine modification. Residues 338–349 (SRDPSAELEAKQ) show a composition bias toward basic and acidic residues. 5 disordered regions span residues 338–400 (SRDP…CGLS), 415–474 (NPEL…MQTK), 487–713 (KELS…AGFQ), 765–788 (KMQE…SMPA), and 800–832 (EERE…TLGY). The segment covering 352-377 (SGMSSPNTTVSVQPLNFDLSSPTSTL) has biased composition (polar residues). Low complexity predominate over residues 378 to 389 (SNYDSCSSSHSS). Positions 428–463 (PTPPPPPPSFPPPPPPPGTQLPPPPPGYPAPKPPVG) are enriched in pro residues. Residues 487 to 505 (KELSSCDGHDGLRRQDSSR) show a composition bias toward basic and acidic residues. Residue Ser515 is modified to Phosphoserine. Pro residues predominate over residues 595–620 (LPPPPPPPPPPLPEAASSPPPAPPLP). Low complexity predominate over residues 633–642 (SSSSTGSTKS). Composition is skewed to polar residues over residues 643–652 (FNMMSPTGDN) and 667–678 (PTPQSKGLTTVF). Ser647 is subject to Phosphoserine. Residues 651 to 668 (DNSELLAEIKAGKSLKPT) enclose the WH2 domain. Ser690 and Ser696 each carry phosphoserine. The segment covering 692 to 703 (LPSVSPALSPVR) has biased composition (low complexity). Positions 756–830 (QVMVRKMQLK…KEQSEKLRTL (75 aa)) form a coiled coil.

As to quaternary structure, monomer. Binds F-actin in a Ca(2+)-resistant fashion. Interacts (via N-terminus) with BAIAP2 (via SH3-domain). Interacts with PFN2. Interacts with MYO3A (via C-terminus). Interacts with MYO3B (via C-terminus).

It is found in the cytoplasm. It localises to the cytoskeleton. The protein localises to the cell projection. The protein resides in the stereocilium. Its subcellular location is the microvillus. Multifunctional actin-bundling protein. Plays a major role in regulating the organization, dimension, dynamics and signaling capacities of the actin filament-rich microvilli in the mechanosensory and chemosensory cells. Required for the assembly and stabilization of the stereociliary parallel actin bundles. Plays a crucial role in the formation and maintenance of inner ear hair cell stereocilia. Involved in the elongation of actin in stereocilia. In extrastriolar hair cells, required for targeting MYO3B to stereocilia tips, and for regulation of stereocilia diameter and staircase formation. The chain is Espin (ESPN) from Homo sapiens (Human).